We begin with the raw amino-acid sequence, 171 residues long: MSNANSFTKEDLIACGLGKLFGPNSPRLPKDNMLMIDRVLKINGDGGEYGKGEIVAELDINPELWFFDCHFAGDPVMPGCLGLDAMWQLVGFFLGWEGAEGKGRALGVGEVKFTGQVLPEAKKVTYKLTIKRKVYRKLVMGIADATMEVDGREIYSAKDLKVGIFTDTTSF.

The active site involves His-70.

Belongs to the thioester dehydratase family. FabA subfamily. As to quaternary structure, homodimer.

The protein resides in the cytoplasm. It carries out the reaction a (3R)-hydroxyacyl-[ACP] = a (2E)-enoyl-[ACP] + H2O. The enzyme catalyses (3R)-hydroxydecanoyl-[ACP] = (2E)-decenoyl-[ACP] + H2O. The catalysed reaction is (2E)-decenoyl-[ACP] = (3Z)-decenoyl-[ACP]. It participates in lipid metabolism; fatty acid biosynthesis. Functionally, necessary for the introduction of cis unsaturation into fatty acids. Catalyzes the dehydration of (3R)-3-hydroxydecanoyl-ACP to E-(2)-decenoyl-ACP and then its isomerization to Z-(3)-decenoyl-ACP. Can catalyze the dehydratase reaction for beta-hydroxyacyl-ACPs with saturated chain lengths up to 16:0, being most active on intermediate chain length. This chain is 3-hydroxydecanoyl-[acyl-carrier-protein] dehydratase, found in Shewanella halifaxensis (strain HAW-EB4).